The chain runs to 834 residues: DNA polymerase I, thermostable (834 aa).

The 5'-3' exonuclease domain maps to 176-262 (RPEQWVDFRA…DLPLEVDLAQ (87 aa)). Residues 412 to 834 (ERLHRNLLKR…MGEDWLSAKG (423 aa)) form a polymerase region.

Belongs to the DNA polymerase type-A family.

The catalysed reaction is DNA(n) + a 2'-deoxyribonucleoside 5'-triphosphate = DNA(n+1) + diphosphate. Functionally, in addition to polymerase activity, this DNA polymerase exhibits 5'-3' exonuclease activity. In Thermus thermophilus (strain ATCC 27634 / DSM 579 / HB8), this protein is DNA polymerase I, thermostable (polA).